Reading from the N-terminus, the 208-residue chain is Protein DEHYDRATION-INDUCED 19 homolog 6 (208 aa).

Residues 151 to 190 form a disordered region; sequence VDSPRRSEADAEGHGSSSSDDQKRREQGVMDDASKEELEE. Basic and acidic residues-rich tracts occupy residues 153–163 and 170–190; these read SPRRSEADAEG and DDQK…ELEE.

The protein belongs to the Di19 family.

This chain is Protein DEHYDRATION-INDUCED 19 homolog 6 (DI19-6), found in Oryza sativa subsp. japonica (Rice).